The sequence spans 166 residues: Large ribosomal subunit protein uL10 (166 aa).

This sequence belongs to the universal ribosomal protein uL10 family. Part of the ribosomal stalk of the 50S ribosomal subunit. The N-terminus interacts with L11 and the large rRNA to form the base of the stalk. The C-terminus forms an elongated spine to which L12 dimers bind in a sequential fashion forming a multimeric L10(L12)X complex.

In terms of biological role, forms part of the ribosomal stalk, playing a central role in the interaction of the ribosome with GTP-bound translation factors. This Pseudomonas putida (strain GB-1) protein is Large ribosomal subunit protein uL10.